Consider the following 509-residue polypeptide: tRNA-2-methylthio-N(6)-dimethylallyladenosine synthase (509 aa).

The segment covering 1–15 (MNEQQRLASQQVNSS) has biased composition (polar residues). The interval 1–23 (MNEQQRLASQQVNSSTKKEEKDY) is disordered. Residues 66-184 (RKFYIRTYGC…LPYILKDAMF (119 aa)) form the MTTase N-terminal domain. 6 residues coordinate [4Fe-4S] cluster: Cys75, Cys111, Cys145, Cys221, Cys225, and Cys228. The Radical SAM core domain occupies 207–437 (RRGDIKAWVN…NALVNKLAIE (231 aa)). The TRAM domain maps to 440–503 (DRYKGQIVEV…TWSLNGELVE (64 aa)).

This sequence belongs to the methylthiotransferase family. MiaB subfamily. As to quaternary structure, monomer. [4Fe-4S] cluster serves as cofactor.

Its subcellular location is the cytoplasm. It catalyses the reaction N(6)-dimethylallyladenosine(37) in tRNA + (sulfur carrier)-SH + AH2 + 2 S-adenosyl-L-methionine = 2-methylsulfanyl-N(6)-dimethylallyladenosine(37) in tRNA + (sulfur carrier)-H + 5'-deoxyadenosine + L-methionine + A + S-adenosyl-L-homocysteine + 2 H(+). Catalyzes the methylthiolation of N6-(dimethylallyl)adenosine (i(6)A), leading to the formation of 2-methylthio-N6-(dimethylallyl)adenosine (ms(2)i(6)A) at position 37 in tRNAs that read codons beginning with uridine. The polypeptide is tRNA-2-methylthio-N(6)-dimethylallyladenosine synthase (Bacillus anthracis).